Consider the following 515-residue polypeptide: 2-isopropylmalate synthase (515 aa).

The Pyruvate carboxyltransferase domain maps to 5 to 268; sequence VIIFDTTLRD…VCGIDASQIV (264 aa). Asp-14, His-202, His-204, and Asn-239 together coordinate Mn(2+). A regulatory domain region spans residues 394–515; that stretch reads HFISLSQHSE…QAKLNAQMAP (122 aa).

The protein belongs to the alpha-IPM synthase/homocitrate synthase family. LeuA type 1 subfamily. In terms of assembly, homodimer. Mn(2+) is required as a cofactor.

It localises to the cytoplasm. It carries out the reaction 3-methyl-2-oxobutanoate + acetyl-CoA + H2O = (2S)-2-isopropylmalate + CoA + H(+). It participates in amino-acid biosynthesis; L-leucine biosynthesis; L-leucine from 3-methyl-2-oxobutanoate: step 1/4. In terms of biological role, catalyzes the condensation of the acetyl group of acetyl-CoA with 3-methyl-2-oxobutanoate (2-ketoisovalerate) to form 3-carboxy-3-hydroxy-4-methylpentanoate (2-isopropylmalate). The sequence is that of 2-isopropylmalate synthase from Polynucleobacter asymbioticus (strain DSM 18221 / CIP 109841 / QLW-P1DMWA-1) (Polynucleobacter necessarius subsp. asymbioticus).